The sequence spans 397 residues: Growth-regulating factor 5 (397 aa).

The QLQ domain occupies 16 to 51 (PFTPTQWEELEHQALIYKYMVSGVPVPPELIFSIRR). 2 consecutive short sequence motifs (bipartite nuclear localization signal) follow at residues 78 to 96 (RKPD…KKWR) and 114 to 121 (RGRNRARK). The 45-residue stretch at 81 to 125 (DPEPGRCRRTDGKKWRCSREAYPDSKYCEKHMHRGRNRARKSLDQ) folds into the WRC domain. Disordered regions lie at residues 108–172 (CEKH…SMDA), 197–217 (LDYP…HHAS), 288–320 (PYHH…DHDH), and 340–397 (VLAN…DTGS). The span at 111 to 120 (HMHRGRNRAR) shows a compositional bias: basic residues. A compositionally biased stretch (low complexity) spans 128–172 (TTTTPLTSPSLSFTNNNNPSPTLSSSSSSNSSSTTYSASSSSMDA). Residues 288-298 (PYHHCSTDHNK) are compositionally biased toward basic and acidic residues.

Belongs to the GRF family. Interacts with GIF1. As to expression, strongly expressed in actively growing and developing tissues, such as roots, upper stems, and shoot tips containing the shoot apical meristem (SAM) and flower buds. Also expressed in mature flowers, but weakly expressed in mature stems and leaves.

The protein resides in the nucleus. In terms of biological role, transcription activator that plays a role in the regulation of cell expansion in leaf and cotyledons tissues. Acts together with GIF1 for the development of appropriate leaf size and shape through the promotion and/or maintenance of cell proliferation activity in leaf primordia. In Arabidopsis thaliana (Mouse-ear cress), this protein is Growth-regulating factor 5 (GRF5).